Here is a 244-residue protein sequence, read N- to C-terminus: Cobalt transport protein CbiM (244 aa).

An N-terminal signal peptide occupies residues 1–27; the sequence is MVEGMLKTNFRLLFLLIFLLIPTPVLA. Transmembrane regions (helical) follow at residues 36–56, 65–85, 102–122, 134–154, 168–188, and 196–216; these read PVKW…VGFI, GPGA…LSAL, LAAI…VLIF, TLGA…YGVY, IFLA…VQLA, and LFLS…PLAI.

It belongs to the CbiM family. In terms of assembly, forms an energy-coupling factor (ECF) transporter complex composed of an ATP-binding protein (A component, CbiO), a transmembrane protein (T component, CbiQ) and 2 possible substrate-capture proteins (S components, CbiM and CbiN) of unknown stoichimetry.

The protein localises to the cell membrane. It participates in cofactor biosynthesis; adenosylcobalamin biosynthesis. Functionally, part of the energy-coupling factor (ECF) transporter complex CbiMNOQ involved in cobalt import. The sequence is that of Cobalt transport protein CbiM from Carboxydothermus hydrogenoformans (strain ATCC BAA-161 / DSM 6008 / Z-2901).